The sequence spans 46 residues: Mu-segestritoxin-Sf1d (46 aa).

Cystine bridges form between cysteine 3-cysteine 19, cysteine 10-cysteine 22, cysteine 18-cysteine 42, and cysteine 24-cysteine 40. The tract at residues 31–33 (RPW) is keys region for toxin activity.

This sequence belongs to the neurotoxin 16 (SFI) family. In terms of tissue distribution, expressed by the venom gland.

It localises to the secreted. In terms of biological role, insecticidal toxin. It inhibits insect voltage-gated sodium channels (Nav) by partially blocking the channel pore in DUM neurons from the American cockroach, not by acting as a gating modifier. The inhibition is only partially reversible after prolonged washout. In vivo, the toxin causes flaccid paralysis followed by death when injected into Heliothis virescens larvae. It also causes uncoordinated movements followed by full paralysis to sheep blowflies (Lucilia cuprina). When the toxin is fused to snowdrop lectin, it is orally active against larvae of the tomato moth (Laconobia oleracea), the rice brown planthopper (Nilaparvata lugens), and the peach-potato aphid (Myzus persicae). This is Mu-segestritoxin-Sf1d from Segestria florentina (Tube-web spider).